The sequence spans 173 residues: Calcineurin subunit B (173 aa).

4 EF-hand domains span residues 20–55 (DEID…AANP), 59–87 (RLMD…FSTK), 89–124 (NKKE…MVGN), and 130–165 (QLQQ…TNVY). Ca(2+)-binding residues include Asp33, Asp35, Ser37, Glu44, Asp65, Asn67, Ser69, Asp71, Glu76, Asp102, Asp104, Asp106, Tyr108, Glu113, Asp143, Asp145, Asp147, Lys149, and Glu154.

Belongs to the calcineurin regulatory subunit family. As to quaternary structure, composed of a catalytic subunit (A) and a regulatory subunit (B).

Its function is as follows. Regulatory subunit of calcineurin, a calcium-dependent, calmodulin stimulated protein phosphatase. Confers calcium sensitivity. The chain is Calcineurin subunit B (CNB1) from Yarrowia lipolytica (strain CLIB 122 / E 150) (Yeast).